A 184-amino-acid chain; its full sequence is MGLEEQLPGGILLSTVEKVAGYVRKNSLWPATFGLACCAIEMMATAGPRFDIARFGMERFSATPRQADLMIVAGRVSQKMAPVLRQIYDQMAEPKWVLAMGVCASSGGMFNNYAIVQGVDHVVPVDIYLPGCPPRPEMLLHAILKLHEKIQEMPLGVNRERAIAEAEEAAMLARPTIEMRGLLR.

Residues C37, C38, C103, and C132 each coordinate [4Fe-4S] cluster.

Belongs to the complex I 20 kDa subunit family. In terms of assembly, NDH-1 is composed of 14 different subunits. Subunits NuoB, C, D, E, F, and G constitute the peripheral sector of the complex. Requires [4Fe-4S] cluster as cofactor.

It localises to the cell membrane. It carries out the reaction a quinone + NADH + 5 H(+)(in) = a quinol + NAD(+) + 4 H(+)(out). Functionally, NDH-1 shuttles electrons from NADH, via FMN and iron-sulfur (Fe-S) centers, to quinones in the respiratory chain. The immediate electron acceptor for the enzyme in this species is believed to be a menaquinone. Couples the redox reaction to proton translocation (for every two electrons transferred, four hydrogen ions are translocated across the cytoplasmic membrane), and thus conserves the redox energy in a proton gradient. The sequence is that of NADH-quinone oxidoreductase subunit B from Mycobacterium marinum (strain ATCC BAA-535 / M).